The following is a 238-amino-acid chain: DNA repair protein RecO (238 aa).

It belongs to the RecO family.

Its function is as follows. Involved in DNA repair and RecF pathway recombination. The protein is DNA repair protein RecO of Flavobacterium psychrophilum (strain ATCC 49511 / DSM 21280 / CIP 103535 / JIP02/86).